Consider the following 3046-residue polypeptide: Nucleosome-remodeling factor subunit BPTF (3046 aa).

The tract at residues 1-232 (MRGRRGRPPK…DIPPLEFPKS (232 aa)) is disordered. The segment covering 22-33 (PAPPPPPPPPTS) has biased composition (pro residues). The segment covering 62 to 72 (TRLSSPRGGSS) has biased composition (low complexity). Pro residues predominate over residues 78 to 87 (PPPPPAPPST). A compositionally biased stretch (gly residues) spans 91–110 (GRGGRGGGGGRTGGGGGGGH). Residues 129 to 186 (HESEEEEEEEDMVSEEEEEEDGDAEETQDSEDDEEDEMEEDDDDSDYPEEMEDDDDDA) show a composition bias toward acidic residues. Residues 190 to 203 (TESSFRSHSTYSST) are compositionally biased toward low complexity. Basic residues predominate over residues 205-215 (GRRKPRVHRPR). Ser-216 bears the Phosphoserine mark. The 61-residue stretch at 240–300 (NEHIMNVIAI…LKAVLREEDT (61 aa)) folds into the DDT domain. The segment at 390-437 (DDHCRVCHKLGDLLCCETCSAVYHLECVKPPLEEVPEDEWQCEVCVAH) adopts a PHD-type 1 zinc-finger fold. 2 stretches are compositionally biased toward basic and acidic residues: residues 567–609 (IDNV…SDDK) and 616–628 (EQGK…EVGD). The segment at 567–774 (IDNVKSPEET…GAGKGASGST (208 aa)) is disordered. Ser-572 is modified (phosphoserine). The stretch at 574-604 (EETEKDKNETENDSKDAEKNREEFEDQSLEK) forms a coiled coil. Polar residues-rich tracts occupy residues 631–653 (NSVS…SPSE) and 690–705 (TCES…SIQP). Positions 640–749 (NTTNATSEET…PVSIQEEIVG (110 aa)) are interaction with KEAP1. Over residues 706-723 (NLENSNSSSELNSSQSES) the composition is skewed to low complexity. Basic and acidic residues predominate over residues 725 to 738 (KAADDPENGERESH). A phosphoserine mark is found at Ser-763 and Ser-817. The tract at residues 839 to 921 (YFKLGQEGKY…QLENNIPSSF (83 aa)) is interaction with MAZ. Residue Lys-880 is modified to N6-acetyllysine. A coiled-coil region spans residues 978-1007 (MTSIEREEKEKVKKKEKKQEEEETMQQATW). Residues 1057 to 1157 (YRKSLEGTKN…MKTESHVNCQ (101 aa)) form a disordered region. Thr-1064 bears the Phosphothreonine mark. 2 stretches are compositionally biased toward basic and acidic residues: residues 1087-1102 (IKIE…KGSD) and 1113-1152 (DISK…KTES). Residues Lys-1088, Lys-1138, and Lys-1209 each participate in a glycyl lysine isopeptide (Lys-Gly) (interchain with G-Cter in SUMO2) cross-link. Disordered stretches follow at residues 1215-1339 (KGIG…GNDF), 1371-1448 (IVSS…FRTR), 1465-1537 (GEST…NGKD), and 1605-1706 (NSSE…GESK). Composition is skewed to polar residues over residues 1220-1232 (TSTN…SESP), 1242-1257 (QSDS…ANND), and 1266-1285 (CSES…TTNK). Ser-1231 bears the Phosphoserine mark. The span at 1287–1305 (YPKDRVLDDVSIRSPETKC) shows a compositional bias: basic and acidic residues. A Phosphoserine modification is found at Ser-1300. Phosphothreonine is present on Thr-1303. Ser-1310 is modified (phosphoserine). Residues 1372-1386 (VSSSKSALHSSVPKS) show a composition bias toward low complexity. Polar residues-rich tracts occupy residues 1409–1426 (SESN…SIQD) and 1434–1444 (VQNSNESISEQ). A compositionally biased stretch (basic and acidic residues) spans 1491 to 1525 (KKLEERPVNKCSDQIKLKNTTDKKNNENRESEKKG). Polar residues predominate over residues 1629–1656 (TLPSTKESDSTQTTTPSASCPESNSVNQ). Lys-1730 participates in a covalent cross-link: Glycyl lysine isopeptide (Lys-Gly) (interchain with G-Cter in SUMO2). Disordered regions lie at residues 1973 to 2003 (VPET…TPKQ) and 2041 to 2070 (QAKK…STIS). Residues 2022–2050 (EIRAFAERVEKEKAQAVEQQAKKRLEQQK) are a coiled coil. Low complexity predominate over residues 2054-2070 (IATSTTSPTSSTTSTIS). Residue Ser-2098 is modified to Phosphoserine. The residue at position 2155 (Arg-2155) is an Omega-N-methylarginine. A disordered region spans residues 2160 to 2180 (TIRPNTSGSGGTTSNSQVITG). Residues Arg-2162, Arg-2184, and Arg-2191 each carry the asymmetric dimethylarginine modification. The span at 2232–2256 (VSAPNTVSSTPGQKSLTSATSTSNI) shows a compositional bias: polar residues. 4 disordered regions span residues 2232 to 2270 (VSAP…QQGQ), 2346 to 2549 (TAST…RPQL), 2714 to 2733 (QAAK…SKQN), and 2795 to 2858 (PCPP…ISTT). Low complexity-rich tracts occupy residues 2257 to 2270 (QSSA…QQGQ) and 2346 to 2362 (TAST…AGTG). Positions 2363–2375 (EQRQSKLSPQMQV) are enriched in polar residues. Low complexity predominate over residues 2391–2431 (PAEAQPQTAQPSAQPQPQTQPQSPAQPEVQTQPEVQTQTTV). The span at 2432 to 2485 (SSHVPSEAQPTHAQSSKPQVAAQSQPQSNVQGQSPVRVQSPSQTRIRPSTPSQL) shows a compositional bias: polar residues. Ser-2465 bears the Phosphoserine mark. Low complexity predominate over residues 2486-2538 (SPGQQSQVQTTTSQPIPIQPHTSLQIPSQGQPQSQPQVQSSTQTLSSGQTLNQ). Residues 2706-2732 (DKIDKEEKQAAKKRKREESVEQKRSKQ) are a coiled coil. Residues 2714-2729 (QAAKKRKREESVEQKR) are compositionally biased toward basic and acidic residues. The span at 2795–2818 (PCPPVTPAPPAPPAPPPSPPPPPA) shows a compositional bias: pro residues. Residues 2838-2847 (KREEEKDSSS) show a composition bias toward basic and acidic residues. Residues 2867-2918 (KLYCICKTPYDESKFYIGCDRCQNWYHGRCVGILQSEAELIDEYVCPQCQST) form a PHD-type 2 zinc finger. The Bromo domain occupies 2927–3031 (PLTEKDYEGL…SFFVQKLKGF (105 aa)).

The protein belongs to the PBTF family. Interacts with MAZ. Interacts with KEAP1. Component of the NURF-1 ISWI chromatin remodeling complex (also called the nucleosome-remodeling factor (NURF) complex) at least composed of SMARCA1 (isoform 2), BPTF, RBBP4 and RBBP7. Within the complex interacts with isoform 2 of SMARCA1. Component of the BPFT-SMARCA1 complex at least composed of SMARCA1 (isoform 1), BPFT, RBBP4 and RBBP7; the complex is catalytically inactive and does not remodel chromatin. Within the complex interacts with isoform 1 of SMARCA1. Component of the NURF-5 ISWI chromatin remodeling complex at least composed of SMARCA5/SNF2H and BPTF. Within NURF-5 ISWI chromatin remodeling complex interacts with SMARCA5/SNF2H. Post-translationally, phosphorylation enhances DNA-binding. Highly susceptible to proteolysis. Ubiquitously expressed, with highest levels in testis. Present in kidney, liver and brain. In the brain, highest levels are found in motor cortex (at protein level).

It is found in the cytoplasm. Its subcellular location is the nucleus. Functionally, regulatory subunit of the ATP-dependent NURF-1 and NURF-5 ISWI chromatin remodeling complexes, which form ordered nucleosome arrays on chromatin and facilitate access to DNA during DNA-templated processes such as DNA replication, transcription, and repair. The NURF-1 ISWI chromatin remodeling complex has a lower ATP hydrolysis rate than the NURF-5 ISWI chromatin remodeling complex. Within the NURF-1 ISWI chromatin-remodeling complex, binds to the promoters of En1 and En2 to positively regulate their expression and promote brain development. Histone-binding protein which binds to H3 tails trimethylated on 'Lys-4' (H3K4me3), which mark transcription start sites of active genes. Binds to histone H3 tails dimethylated on 'Lys-4' (H3K4Me2) to a lesser extent. May also regulate transcription through direct binding to DNA or transcription factors. This chain is Nucleosome-remodeling factor subunit BPTF (BPTF), found in Homo sapiens (Human).